The chain runs to 444 residues: U4/U6 snRNA-associated-splicing factor PRP24 (444 aa).

The span at 1-16 shows a compositional bias: basic and acidic residues; it reads MEYGHHARPDSKRPLD. The disordered stretch occupies residues 1–29; sequence MEYGHHARPDSKRPLDEGSPAAAGLTSKK. Residue serine 19 is modified to Phosphoserine. RRM domains follow at residues 41-116, 117-195, and 210-289; these read TTVL…HLTE, CTLW…VSNP, and REIM…LADK.

As to quaternary structure, monomer. Interacts with U6 snRNA SNR6 and the LSM2-8 complex (small nuclear RNA); to chaperone formation of the U4/U6-U5 tri-snRNP (small nuclear ribonucleoprotein) assembly, the protein is displaced from the U4/U6 snRNP once pairing is complete.

It is found in the nucleus. In terms of biological role, functions as a recycling factor of the spliceosome, a machinery that forms on each precursor-messenger RNA (pre-mRNA) and catalyzes the removal of introns. Chaperones the re-annealing of U4 and U6 snRNAs (small nuclear RNAs) released from previous rounds of splicing, an initial step in reforming the U4/U6-U5 tri-snRNP (small nuclear ribonucleoprotein) that can reassemble into another spliceosome complex; this step involves binding U6 and facilitating the unwinding of the U6 internal stem loop, followed by base-pairing of U6 to U4. This Saccharomyces cerevisiae (strain ATCC 204508 / S288c) (Baker's yeast) protein is U4/U6 snRNA-associated-splicing factor PRP24 (PRP24).